A 214-amino-acid polypeptide reads, in one-letter code: ATP-dependent Clp protease proteolytic subunit (214 aa).

Residue serine 110 is the Nucleophile of the active site. The active site involves histidine 135.

The protein belongs to the peptidase S14 family. Fourteen ClpP subunits assemble into 2 heptameric rings which stack back to back to give a disk-like structure with a central cavity, resembling the structure of eukaryotic proteasomes.

The protein localises to the cytoplasm. The catalysed reaction is Hydrolysis of proteins to small peptides in the presence of ATP and magnesium. alpha-casein is the usual test substrate. In the absence of ATP, only oligopeptides shorter than five residues are hydrolyzed (such as succinyl-Leu-Tyr-|-NHMec, and Leu-Tyr-Leu-|-Tyr-Trp, in which cleavage of the -Tyr-|-Leu- and -Tyr-|-Trp bonds also occurs).. Functionally, cleaves peptides in various proteins in a process that requires ATP hydrolysis. Has a chymotrypsin-like activity. Plays a major role in the degradation of misfolded proteins. The sequence is that of ATP-dependent Clp protease proteolytic subunit from Legionella pneumophila (strain Corby).